Reading from the N-terminus, the 335-residue chain is Anthranilate phosphoribosyltransferase (335 aa).

Residues glycine 79, 82 to 83 (GD), serine 87, 89 to 92 (NIST), 107 to 115 (KHGNRSITS), and serine 119 each bind 5-phospho-alpha-D-ribose 1-diphosphate. Anthranilate is bound at residue glycine 79. Serine 91 provides a ligand contact to Mg(2+). Asparagine 110 is an anthranilate binding site. Arginine 165 is an anthranilate binding site. Mg(2+)-binding residues include aspartate 224 and glutamate 225.

The protein belongs to the anthranilate phosphoribosyltransferase family. In terms of assembly, homodimer. Mg(2+) is required as a cofactor.

It carries out the reaction N-(5-phospho-beta-D-ribosyl)anthranilate + diphosphate = 5-phospho-alpha-D-ribose 1-diphosphate + anthranilate. It functions in the pathway amino-acid biosynthesis; L-tryptophan biosynthesis; L-tryptophan from chorismate: step 2/5. Catalyzes the transfer of the phosphoribosyl group of 5-phosphorylribose-1-pyrophosphate (PRPP) to anthranilate to yield N-(5'-phosphoribosyl)-anthranilate (PRA). The chain is Anthranilate phosphoribosyltransferase from Lactococcus lactis subsp. cremoris (strain SK11).